The sequence spans 74 residues: UPF0154 protein LSL_0542 (74 aa).

A helical membrane pass occupies residues 5 to 25; sequence IWVLIVIIAAVLGFVGGFFAA.

This sequence belongs to the UPF0154 family.

It localises to the cell membrane. This Ligilactobacillus salivarius (strain UCC118) (Lactobacillus salivarius) protein is UPF0154 protein LSL_0542.